The primary structure comprises 122 residues: MPATAYERVVYKSPSEYHYMKVCLEFQEHGVGLNVAQFKQLLVSALRDLFGEVGAALPVDVLTYDEKTLSAILRICSSGLVKLWSSLTLFGAYKSKKCAFRVIQVSPFLLALSGNSREQVLD.

Belongs to the eukaryotic/archaeal RNase P protein component 2 family. As to quaternary structure, RNase P consists of a catalytic RNA moiety and about 10 protein subunits; POP1, POP4, POP5, POP7, RPP14, RPP21, RPP25, RPP30, RPP38 and RPP40. Within the RNase P complex, POP1, POP7 and RPP25 form the 'finger' subcomplex, POP5, RPP14, RPP40 and homodimeric RPP30 form the 'palm' subcomplex, and RPP21, POP4 and RPP38 form the 'wrist' subcomplex. All subunits of the RNase P complex interact with the catalytic RNA.

It is found in the nucleus. The protein resides in the nucleolus. Its function is as follows. Component of ribonuclease P, a ribonucleoprotein complex that generates mature tRNA molecules by cleaving their 5'-ends. The chain is Ribonuclease P protein subunit p14 (Rpp14) from Mus musculus (Mouse).